The sequence spans 58 residues: U8-ctenitoxin-Pk1a (58 aa).

Intrachain disulfides connect Cys2–Cys16, Cys9–Cys22, Cys15–Cys40, Cys24–Cys38, and Cys48–Cys55.

Expressed by the venom gland.

The protein resides in the secreted. No toxic effects on mice at dose levels of 5 ug per mouse. May be toxic to insects. This Phoneutria keyserlingi (Brazilian wandering spider) protein is U8-ctenitoxin-Pk1a.